The following is a 179-amino-acid chain: MSAVSTYAEALFGAAREKDELERVLDDLREFCRALRESEELALFFYGEQIPEREKRRAIEALTEGMSPLTTNFLKVLCDNRREEILEDVLRRYEEMVEDHLGRIEVEVVTATELSGEMQERIRERIARVLGGREVILRTSVDPEILGGAVFRFKDRLVDSSIRGRLEGLREAMLERGVV.

It belongs to the ATPase delta chain family. In terms of assembly, F-type ATPases have 2 components, F(1) - the catalytic core - and F(0) - the membrane proton channel. F(1) has five subunits: alpha(3), beta(3), gamma(1), delta(1), epsilon(1). F(0) has three main subunits: a(1), b(2) and c(10-14). The alpha and beta chains form an alternating ring which encloses part of the gamma chain. F(1) is attached to F(0) by a central stalk formed by the gamma and epsilon chains, while a peripheral stalk is formed by the delta and b chains.

The protein localises to the cell membrane. Functionally, f(1)F(0) ATP synthase produces ATP from ADP in the presence of a proton or sodium gradient. F-type ATPases consist of two structural domains, F(1) containing the extramembraneous catalytic core and F(0) containing the membrane proton channel, linked together by a central stalk and a peripheral stalk. During catalysis, ATP synthesis in the catalytic domain of F(1) is coupled via a rotary mechanism of the central stalk subunits to proton translocation. This protein is part of the stalk that links CF(0) to CF(1). It either transmits conformational changes from CF(0) to CF(1) or is implicated in proton conduction. This is ATP synthase subunit delta from Rubrobacter xylanophilus (strain DSM 9941 / JCM 11954 / NBRC 16129 / PRD-1).